Reading from the N-terminus, the 807-residue chain is Sucrose synthase 2 (807 aa).

The segment at 274–752 is GT-B glycosyltransferase; it reads MVFNVVILSP…GLKRIYERYT (479 aa).

The protein belongs to the glycosyltransferase 1 family. Plant sucrose synthase subfamily. Detected in the whole plant but at lower levels. Predominantly expressed in developing siliques. Also detected in the root tip. Detected in the embryo, endosperm and seed coat (at the protein level).

It localises to the cytoplasm. The protein localises to the plastid membrane. The enzyme catalyses an NDP-alpha-D-glucose + D-fructose = a ribonucleoside 5'-diphosphate + sucrose + H(+). Functionally, sucrose-cleaving enzyme that provides UDP-glucose and fructose for various metabolic pathways. Modulates metabolic homeostasis and directs carbon towards starch synthesis in developing seeds. The chain is Sucrose synthase 2 (SUS2) from Arabidopsis thaliana (Mouse-ear cress).